Here is a 129-residue protein sequence, read N- to C-terminus: Fluoride-specific ion channel FluC 2 (129 aa).

The next 4 helical transmembrane spans lie at Leu4–Gly24, Thr39–Val59, Tyr65–Ser85, and Val104–Leu124. Positions 79 and 82 each coordinate Na(+).

The protein belongs to the fluoride channel Fluc/FEX (TC 1.A.43) family.

It is found in the cell inner membrane. The catalysed reaction is fluoride(in) = fluoride(out). Na(+) is not transported, but it plays an essential structural role and its presence is essential for fluoride channel function. Functionally, fluoride-specific ion channel. Important for reducing fluoride concentration in the cell, thus reducing its toxicity. The protein is Fluoride-specific ion channel FluC 2 of Brucella abortus biovar 1 (strain 9-941).